The sequence spans 512 residues: Probable anion transporter 3, chloroplastic (512 aa).

Residues 1-44 (MATVGSLKPLHHSSCSSSFPRNPIVNRKALLGFVFDSARKNQIR) constitute a chloroplast transit peptide. A run of 12 helical transmembrane segments spans residues 102 to 124 (VILTACMMCLCNADRVVMSVAVV), 139 to 159 (VVQSSFLWGYIFSSVIGGALV), 167 to 187 (VLAWGVALWSLATLLTPWAAA), 191 to 211 (LALLCVRAFFGLAEGVAMPSM), 228 to 248 (VGISMAGFHMGNVVGLLLTPL), 250 to 270 (LSSIGISGPFILFASLGLLWV), 324 to 344 (WAIIFANVTNNWGYFVLLSWM), 359 to 379 (AAWFSALPWATMAISGYYAGA), 396 to 416 (KIMQSIGFMGPGLSLLCLNFA), 422 to 442 (AAVFMTIALSLSSFSQAGFLL), 462 to 482 (AGTLAAIVSTIGTGYFVQWLG), and 486 to 506 (AFLTVTAFLYFATTVFWLLFA).

The protein belongs to the major facilitator superfamily. Sodium/anion cotransporter (TC 2.A.1.14) family. In terms of tissue distribution, expressed in roots.

Its subcellular location is the plastid. It is found in the chloroplast membrane. In terms of biological role, inorganic phosphate and probable anion transporter. This chain is Probable anion transporter 3, chloroplastic (ANTR3), found in Arabidopsis thaliana (Mouse-ear cress).